We begin with the raw amino-acid sequence, 269 residues long: Tropinone reductase homolog At2g29320 (269 aa).

19–43 (LVTGAASGIGYAIVEELAGFGAKIH) contributes to the NADP(+) binding site. Residue S152 coordinates substrate. The active-site Proton acceptor is the Y166.

The protein belongs to the short-chain dehydrogenases/reductases (SDR) family. SDR65C subfamily.

This Arabidopsis thaliana (Mouse-ear cress) protein is Tropinone reductase homolog At2g29320.